The chain runs to 672 residues: Glycine--tRNA ligase beta subunit (672 aa).

The protein belongs to the class-II aminoacyl-tRNA synthetase family. As to quaternary structure, tetramer of two alpha and two beta subunits.

It is found in the cytoplasm. It carries out the reaction tRNA(Gly) + glycine + ATP = glycyl-tRNA(Gly) + AMP + diphosphate. The protein is Glycine--tRNA ligase beta subunit of Thermotoga sp. (strain RQ2).